The primary structure comprises 162 residues: ATP synthase subunit b (162 aa).

Residues 6–26 traverse the membrane as a helical segment; that stretch reads PDIGLLFWMLLSFGIVFFVAA.

The protein belongs to the ATPase B chain family. F-type ATPases have 2 components, F(1) - the catalytic core - and F(0) - the membrane proton channel. F(1) has five subunits: alpha(3), beta(3), gamma(1), delta(1), epsilon(1). F(0) has three main subunits: a(1), b(2) and c(10-14). The alpha and beta chains form an alternating ring which encloses part of the gamma chain. F(1) is attached to F(0) by a central stalk formed by the gamma and epsilon chains, while a peripheral stalk is formed by the delta and b chains.

The protein resides in the cell inner membrane. Functionally, f(1)F(0) ATP synthase produces ATP from ADP in the presence of a proton or sodium gradient. F-type ATPases consist of two structural domains, F(1) containing the extramembraneous catalytic core and F(0) containing the membrane proton channel, linked together by a central stalk and a peripheral stalk. During catalysis, ATP synthesis in the catalytic domain of F(1) is coupled via a rotary mechanism of the central stalk subunits to proton translocation. Its function is as follows. Component of the F(0) channel, it forms part of the peripheral stalk, linking F(1) to F(0). This chain is ATP synthase subunit b, found in Azobacteroides pseudotrichonymphae genomovar. CFP2.